We begin with the raw amino-acid sequence, 342 residues long: Central glycolytic genes regulator (342 aa).

A DNA-binding region (H-T-H motif) is located at residues 37-56 (RRNLAVSLGLTERVLRSEVT).

This sequence belongs to the SorC transcriptional regulatory family. As to quaternary structure, homotetramer.

Its function is as follows. In the absence of glucose, represses the transcription of the gapA operon, which encodes five key glycolytic enzymes. This Priestia megaterium (strain DSM 319 / IMG 1521) (Bacillus megaterium) protein is Central glycolytic genes regulator (cggR).